Here is a 392-residue protein sequence, read N- to C-terminus: p21-activated protein kinase-interacting protein 1 (392 aa).

WD repeat units follow at residues 40–77, 80–118, 121–160, 202–240, and 243–284; these read AHTASLSAVAVNSRFVVTGSKDETIHIYDMKKKVDHGA, HHNGTITCLKFHGNRHLISGAEDGLICVWDARRWECLKS, AHKGHVTFLSIHPSGRLALSVGTDKTLRTWNLVEGRSAFI, TNERRVSSVTFLSESVLTVAGDEEVVRFFDCDSLTCLSE, and AHEN…KVSP. Residues 309-392 form a disordered region; it reads TKESPPAAAE…RKKKKIRMMQ (84 aa). Over residues 325-351 the composition is skewed to basic and acidic residues; it reads EQSRRNKEESGHAVQEEEKQPKPDTEK. Over residues 355–368 the composition is skewed to polar residues; that stretch reads TGDSNKPTRGNSLV. The span at 381 to 392 shows a compositional bias: basic residues; sequence KKRKKKKIRMMQ.

Interacts with PAK1.

The protein localises to the nucleus. It localises to the nucleolus. Negatively regulates the PAK1 kinase. PAK1 is a member of the PAK kinase family, which has been shown to play a positive role in the regulation of signaling pathways involving MAPK8 and RELA. PAK1 exists as an inactive homodimer, which is activated by binding of small GTPases such as CDC42 to an N-terminal regulatory domain. PAK1IP1 also binds to the N-terminus of PAK1, and inhibits the specific activation of PAK1 by CDC42. May be involved in ribosomal large subunit assembly. The polypeptide is p21-activated protein kinase-interacting protein 1 (PAK1IP1) (Bos taurus (Bovine)).